The chain runs to 766 residues: DNA ligase (766 aa).

The interval 1–30 (MSTVNAKGAKPATDANGQSLNPEEPSEALR) is disordered. Residues 57–61 (DAEYD), 106–107 (SL), and glutamate 141 contribute to the NAD(+) site. Residue lysine 143 is the N6-AMP-lysine intermediate of the active site. Arginine 164, glutamate 201, lysine 317, and lysine 341 together coordinate NAD(+). Positions 435, 438, 454, and 460 each coordinate Zn(2+). In terms of domain architecture, BRCT spans 669–758 (STPRTLEGVT…PEAFGDRADA (90 aa)). Positions 747-766 (QGPEAFGDRADAADQPAAGE) are disordered.

This sequence belongs to the NAD-dependent DNA ligase family. LigA subfamily. It depends on Mg(2+) as a cofactor. The cofactor is Mn(2+).

It carries out the reaction NAD(+) + (deoxyribonucleotide)n-3'-hydroxyl + 5'-phospho-(deoxyribonucleotide)m = (deoxyribonucleotide)n+m + AMP + beta-nicotinamide D-nucleotide.. Functionally, DNA ligase that catalyzes the formation of phosphodiester linkages between 5'-phosphoryl and 3'-hydroxyl groups in double-stranded DNA using NAD as a coenzyme and as the energy source for the reaction. It is essential for DNA replication and repair of damaged DNA. The sequence is that of DNA ligase from Kocuria rhizophila (strain ATCC 9341 / DSM 348 / NBRC 103217 / DC2201).